Reading from the N-terminus, the 155-residue chain is 3-hydroxyacyl-[acyl-carrier-protein] dehydratase FabZ (155 aa).

His-58 is an active-site residue.

The protein belongs to the thioester dehydratase family. FabZ subfamily.

The protein localises to the cytoplasm. The enzyme catalyses a (3R)-hydroxyacyl-[ACP] = a (2E)-enoyl-[ACP] + H2O. Functionally, involved in unsaturated fatty acids biosynthesis. Catalyzes the dehydration of short chain beta-hydroxyacyl-ACPs and long chain saturated and unsaturated beta-hydroxyacyl-ACPs. This chain is 3-hydroxyacyl-[acyl-carrier-protein] dehydratase FabZ, found in Rhizobium etli (strain ATCC 51251 / DSM 11541 / JCM 21823 / NBRC 15573 / CFN 42).